The chain runs to 62 residues: Sperm protamine P1 (62 aa).

The tract at residues 1–62 (MARYRHSRSR…RYSRRRRRRY (62 aa)) is disordered.

It belongs to the protamine P1 family. As to expression, testis.

It is found in the nucleus. The protein resides in the chromosome. Protamines substitute for histones in the chromatin of sperm during the haploid phase of spermatogenesis. They compact sperm DNA into a highly condensed, stable and inactive complex. The sequence is that of Sperm protamine P1 (PRM1) from Lagostrophus fasciatus (Banded hare-wallaby).